Here is a 407-residue protein sequence, read N- to C-terminus: Endo-1,4-beta-xylanase (407 aa).

The signal sequence occupies residues 1–28 (MRNVVRKPLTIGLALTLLLPMGMTATSA). Positions 42–406 (ALNAPQLDQR…KPAYWAIIDH (365 aa)) constitute a GH10 domain. The active-site Proton donor is Glu-187. Glu-293 serves as the catalytic Nucleophile.

The protein belongs to the glycosyl hydrolase 10 (cellulase F) family.

It localises to the secreted. It carries out the reaction Endohydrolysis of (1-&gt;4)-beta-D-xylosidic linkages in xylans.. It participates in glycan degradation; xylan degradation. This Geobacillus stearothermophilus (Bacillus stearothermophilus) protein is Endo-1,4-beta-xylanase.